The primary structure comprises 201 residues: MQTSPLLESLMEALRCLPGVGPKSAQRMAFQLLQRDRSGGMRLAQSLTRAMSEIGHCADCRTFTEQEHCTICSNPRRQQNGQICVVESPADIHAIEQTGQFGGRYFVLMGHLSPMDGIGPGDIGLDLLEKRLETETISEVILATNPTVEGDATANYIGQMCGQYGVLASRIAHGVPVGGELEMVDGTTLSHSLAGRNPIKY.

The C4-type zinc finger occupies 57-72; sequence CADCRTFTEQEHCTIC. The Toprim domain maps to 81-176; sequence GQICVVESPA…LASRIAHGVP (96 aa).

Belongs to the RecR family.

Its function is as follows. May play a role in DNA repair. It seems to be involved in an RecBC-independent recombinational process of DNA repair. It may act with RecF and RecO. This is Recombination protein RecR from Yersinia enterocolitica serotype O:8 / biotype 1B (strain NCTC 13174 / 8081).